Consider the following 232-residue polypeptide: Cell surface superoxide dismutase [Cu-Zn] 4 (232 aa).

The N-terminal stretch at Met1 to Ala15 is a signal peptide. Residue Asn53 is glycosylated (N-linked (GlcNAc...) asparagine). His75 and His77 together coordinate Cu cation. Asn86 is a glycosylation site (N-linked (GlcNAc...) asparagine). His93 contributes to the Cu cation binding site. Position 93 (His93) interacts with Zn(2+). N-linked (GlcNAc...) asparagine glycosylation occurs at Asn98. Residue Asp113 coordinates Zn(2+). The N-linked (GlcNAc...) asparagine glycan is linked to Asn120. His153 lines the Cu cation pocket. Asn156, Asn164, Asn182, Asn193, and Asn196 each carry an N-linked (GlcNAc...) asparagine glycan. The span at Thr174–Gly208 shows a compositional bias: low complexity. The tract at residues Thr174–Ala211 is disordered. Ser209 carries GPI-anchor amidated serine lipidation. Residues Gly210–Ile232 constitute a propeptide, removed in mature form. A substrate-binding site is contributed by Arg213.

This sequence belongs to the Cu-Zn superoxide dismutase family. Cu cation is required as a cofactor. Zn(2+) serves as cofactor. The GPI-anchor is attached to the protein in the endoplasmic reticulum and serves to target the protein to the cell surface. There, the glucosamine-inositol phospholipid moiety is cleaved off and the GPI-modified mannoprotein is covalently attached via its lipidless GPI glycan remnant to the 1,6-beta-glucan of the outer cell wall layer.

The protein resides in the secreted. Its subcellular location is the cell wall. It localises to the membrane. The enzyme catalyses 2 superoxide + 2 H(+) = H2O2 + O2. Functionally, superoxide dismutases serve to convert damaging superoxide radicals, a key form of ROS, to less damaging hydrogen peroxide that can be converted into water by catalase action. Degrades host-derived reactive oxygen species to escape innate immune surveillance. Involved in the occurrence of miconazole-tolerant persisters in biofilms. Persisters are cells that survive high doses of an antimicrobial agent. This Candida albicans (strain SC5314 / ATCC MYA-2876) (Yeast) protein is Cell surface superoxide dismutase [Cu-Zn] 4 (SOD4).